The sequence spans 282 residues: Bifunctional protein FolD (282 aa).

Residues 164–166 (GAS), Ile-189, and Ile-230 contribute to the NADP(+) site.

Belongs to the tetrahydrofolate dehydrogenase/cyclohydrolase family. In terms of assembly, homodimer.

The catalysed reaction is (6R)-5,10-methylene-5,6,7,8-tetrahydrofolate + NADP(+) = (6R)-5,10-methenyltetrahydrofolate + NADPH. The enzyme catalyses (6R)-5,10-methenyltetrahydrofolate + H2O = (6R)-10-formyltetrahydrofolate + H(+). It functions in the pathway one-carbon metabolism; tetrahydrofolate interconversion. Its function is as follows. Catalyzes the oxidation of 5,10-methylenetetrahydrofolate to 5,10-methenyltetrahydrofolate and then the hydrolysis of 5,10-methenyltetrahydrofolate to 10-formyltetrahydrofolate. The polypeptide is Bifunctional protein FolD (Campylobacter jejuni subsp. doylei (strain ATCC BAA-1458 / RM4099 / 269.97)).